Here is a 133-residue protein sequence, read N- to C-terminus: ATP synthase epsilon chain (133 aa).

The protein belongs to the ATPase epsilon chain family. F-type ATPases have 2 components, CF(1) - the catalytic core - and CF(0) - the membrane proton channel. CF(1) has five subunits: alpha(3), beta(3), gamma(1), delta(1), epsilon(1). CF(0) has three main subunits: a, b and c.

It is found in the cell membrane. In terms of biological role, produces ATP from ADP in the presence of a proton gradient across the membrane. The polypeptide is ATP synthase epsilon chain (atpC) (Mycoplasma pneumoniae (strain ATCC 29342 / M129 / Subtype 1) (Mycoplasmoides pneumoniae)).